The following is a 156-amino-acid chain: SsrA-binding protein (156 aa).

It belongs to the SmpB family.

It is found in the cytoplasm. Its function is as follows. Required for rescue of stalled ribosomes mediated by trans-translation. Binds to transfer-messenger RNA (tmRNA), required for stable association of tmRNA with ribosomes. tmRNA and SmpB together mimic tRNA shape, replacing the anticodon stem-loop with SmpB. tmRNA is encoded by the ssrA gene; the 2 termini fold to resemble tRNA(Ala) and it encodes a 'tag peptide', a short internal open reading frame. During trans-translation Ala-aminoacylated tmRNA acts like a tRNA, entering the A-site of stalled ribosomes, displacing the stalled mRNA. The ribosome then switches to translate the ORF on the tmRNA; the nascent peptide is terminated with the 'tag peptide' encoded by the tmRNA and targeted for degradation. The ribosome is freed to recommence translation, which seems to be the essential function of trans-translation. In Thermoanaerobacter pseudethanolicus (strain ATCC 33223 / 39E) (Clostridium thermohydrosulfuricum), this protein is SsrA-binding protein.